Here is a 76-residue protein sequence, read N- to C-terminus: DNA-directed RNA polymerase subunit omega (76 aa).

It belongs to the RNA polymerase subunit omega family. In terms of assembly, in cyanobacteria the RNAP catalytic core is composed of 2 alpha, 1 beta, 1 beta', 1 gamma and 1 omega subunit. When a sigma factor is associated with the core the holoenzyme is formed, which can initiate transcription.

It carries out the reaction RNA(n) + a ribonucleoside 5'-triphosphate = RNA(n+1) + diphosphate. In terms of biological role, promotes RNA polymerase assembly. Latches the N- and C-terminal regions of the beta' subunit thereby facilitating its interaction with the beta and alpha subunits. The polypeptide is DNA-directed RNA polymerase subunit omega (Acaryochloris marina (strain MBIC 11017)).